Reading from the N-terminus, the 53-residue chain is MGMSFSHLLIVLLIIFVLFGAGKLPQVMSDLAKGLKAFKDGMKDDGSDNDKNK.

Residues 1–21 (MGMSFSHLLIVLLIIFVLFGA) form a helical membrane-spanning segment.

Belongs to the TatA/E family. As to quaternary structure, the Tat system comprises two distinct complexes: a TatABC complex, containing multiple copies of TatA, TatB and TatC subunits, and a separate TatA complex, containing only TatA subunits. Substrates initially bind to the TatABC complex, which probably triggers association of the separate TatA complex to form the active translocon.

It is found in the cell inner membrane. Part of the twin-arginine translocation (Tat) system that transports large folded proteins containing a characteristic twin-arginine motif in their signal peptide across membranes. TatA could form the protein-conducting channel of the Tat system. The protein is Sec-independent protein translocase protein TatA of Rickettsia rickettsii (strain Iowa).